Here is a 168-residue protein sequence, read N- to C-terminus: G/U mismatch-specific DNA glycosylase (168 aa).

The protein belongs to the uracil-DNA glycosylase (UDG) superfamily. TDG/mug family. As to quaternary structure, binds DNA as a monomer.

Its subcellular location is the cytoplasm. The catalysed reaction is Specifically hydrolyzes mismatched double-stranded DNA and polynucleotides, releasing free uracil.. Functionally, excises ethenocytosine and uracil, which can arise by alkylation or deamination of cytosine, respectively, from the corresponding mispairs with guanine in ds-DNA. It is capable of hydrolyzing the carbon-nitrogen bond between the sugar-phosphate backbone of the DNA and the mispaired base. The complementary strand guanine functions in substrate recognition. Required for DNA damage lesion repair in stationary-phase cells. The polypeptide is G/U mismatch-specific DNA glycosylase (Salmonella paratyphi B (strain ATCC BAA-1250 / SPB7)).